A 152-amino-acid chain; its full sequence is Methylglyoxal synthase (152 aa).

The MGS-like domain maps to 6-152 (RTIPAQKHIA…YQRYLQDRLK (147 aa)). Substrate contacts are provided by residues H19, K23, 45-48 (TGTT), and 65-66 (SG). The active-site Proton donor/acceptor is D71. H98 is a substrate binding site.

Belongs to the methylglyoxal synthase family.

The catalysed reaction is dihydroxyacetone phosphate = methylglyoxal + phosphate. In terms of biological role, catalyzes the formation of methylglyoxal from dihydroxyacetone phosphate. The sequence is that of Methylglyoxal synthase from Pectobacterium atrosepticum (strain SCRI 1043 / ATCC BAA-672) (Erwinia carotovora subsp. atroseptica).